We begin with the raw amino-acid sequence, 372 residues long: Glutamate 5-kinase (372 aa).

Residue K14 coordinates ATP. Substrate contacts are provided by S54, D141, and N153. 173 to 174 (TD) provides a ligand contact to ATP. A PUA domain is found at 280–358 (RGTLVLDAGA…DAIEKLLGYV (79 aa)).

Belongs to the glutamate 5-kinase family.

It localises to the cytoplasm. It carries out the reaction L-glutamate + ATP = L-glutamyl 5-phosphate + ADP. It participates in amino-acid biosynthesis; L-proline biosynthesis; L-glutamate 5-semialdehyde from L-glutamate: step 1/2. Its function is as follows. Catalyzes the transfer of a phosphate group to glutamate to form L-glutamate 5-phosphate. The chain is Glutamate 5-kinase from Ectopseudomonas mendocina (strain ymp) (Pseudomonas mendocina).